The following is a 294-amino-acid chain: ATP synthase gamma chain (294 aa).

Belongs to the ATPase gamma chain family. As to quaternary structure, F-type ATPases have 2 components, CF(1) - the catalytic core - and CF(0) - the membrane proton channel. CF(1) has five subunits: alpha(3), beta(3), gamma(1), delta(1), epsilon(1). CF(0) has three main subunits: a, b and c.

It localises to the cell inner membrane. In terms of biological role, produces ATP from ADP in the presence of a proton gradient across the membrane. The gamma chain is believed to be important in regulating ATPase activity and the flow of protons through the CF(0) complex. The sequence is that of ATP synthase gamma chain from Paramagnetospirillum magneticum (strain ATCC 700264 / AMB-1) (Magnetospirillum magneticum).